Here is a 153-residue protein sequence, read N- to C-terminus: Melatonin receptor type 1A X2.0 (153 aa).

The Cytoplasmic portion of the chain corresponds to 1-12 (HSSWYNRLFSNS). A helical membrane pass occupies residues 13-33 (GTICYVGLVWVLALGAILPNL). Residues 34 to 57 (FVGSLRCDPRIFSCTFAQYVSSYY) are Extracellular-facing. Residues 58–78 (TIAVVIFHFFLPIGVVSYCYL) traverse the membrane as a helical segment. Over 79 to 112 (RIWVLVLNIRHRVKPDRHLHHQTWPYNIHGFITM) the chain is Cytoplasmic. A helical transmembrane segment spans residues 113–133 (FVVFVLFAVCWGPLNIIGLTV). Over 134–145 (AIYPPLGDSIPQ) the chain is Extracellular. Residues 146–153 (WLFVASYF) traverse the membrane as a helical segment.

Belongs to the G-protein coupled receptor 1 family.

It is found in the cell membrane. Its function is as follows. High affinity receptor for melatonin. The activity of this receptor is mediated by pertussis toxin sensitive G proteins that inhibits adenylate cyclase activity. This Xenopus laevis (African clawed frog) protein is Melatonin receptor type 1A X2.0.